We begin with the raw amino-acid sequence, 153 residues long: Small ribosomal subunit protein uS5c (153 aa).

The region spanning 11-74 is the S5 DRBM domain; that stretch reads WQERVIQIRR…VDAKKQLINI (64 aa).

Belongs to the universal ribosomal protein uS5 family. Part of the 30S ribosomal subunit. Contacts protein S4.

The protein localises to the plastid. It is found in the chloroplast. Its function is as follows. With S4 and S12 plays an important role in translational accuracy. This is Small ribosomal subunit protein uS5c (rps5) from Cyanidioschyzon merolae (strain NIES-3377 / 10D) (Unicellular red alga).